The following is a 440-amino-acid chain: MRLSRYFMPILKENPKEAEIVSHRLMLRAGMIRQQSQGIYSWLPLGKRVLDKVNAIIRDEQNRAGAIELSMPTLQSAELWQESGRYDAYGKEMLRIKDRQDRPMLYGPTNEEMVTDIFRSSVKSYKDLPLNLYHIQLKFRDEIRPRFGTMRSREFMMKDAYSFDLTREGAEHSYNKMFAAYLRTFDRLGLRAIPMRADTGPIGGNLSHEFIILADTGESEVFCHKDFVGFDIPDDRTDFDSVDGLKAIFDKWTSLYAATSEMHDEAAFNAVPEGDRLSARGIEVGHIFYFGTKYSEAMGAKVQGPDGKEHFVHMGSYGIGPTRLVPAIIEASHDDNGIIWPASVAPFDIVVINMKAGDQACDDTCELIYAALTKAGKDVLYDDTDDRAGTKFATADLIGVPFQIIAGPRAVANGEVEVKDRKTGARETMTIEAAINRFVA.

It belongs to the class-II aminoacyl-tRNA synthetase family. ProS type 2 subfamily. As to quaternary structure, homodimer.

It localises to the cytoplasm. It carries out the reaction tRNA(Pro) + L-proline + ATP = L-prolyl-tRNA(Pro) + AMP + diphosphate. Its function is as follows. Catalyzes the attachment of proline to tRNA(Pro) in a two-step reaction: proline is first activated by ATP to form Pro-AMP and then transferred to the acceptor end of tRNA(Pro). In Rhizobium leguminosarum bv. trifolii (strain WSM2304), this protein is Proline--tRNA ligase.